Consider the following 65-residue polypeptide: UPF0434 protein Rpal_0270 (65 aa).

It belongs to the UPF0434 family.

The chain is UPF0434 protein Rpal_0270 from Rhodopseudomonas palustris (strain TIE-1).